Consider the following 376-residue polypeptide: C2H2 type master regulator of conidiophore development brlA (376 aa).

The segment covering 20–29 has biased composition (low complexity); that stretch reads TSFSSASSSA. Disordered regions lie at residues 20–47, 197–229, and 241–267; these read TSFS…ELSL, HHHH…ASPN, and EAQR…PESG. Polar residues predominate over residues 34–44; it reads TPSSRRSTPNE. The span at 197–209 shows a compositional bias: basic residues; that stretch reads HHHHHNHHQHHHA. The span at 219–229 shows a compositional bias: polar residues; that stretch reads QLHSNTGASPN. Positions 241–256 are enriched in basic and acidic residues; that stretch reads EAQRKTSELQRAQIRE. Residues 277-301 form a C2H2-type 1; degenerate zinc finger; that stretch reads CKCDYPGCNKAFRRNEHLKRHKQTF. A C2H2-type 2 zinc finger spans residues 309–332; sequence FSCEFCGKDQFNRQDNLNNHRKLH. Positions 351 to 376 are disordered; the sequence is IIEHEERSRKRRAPPKSKAEKRDYDF. Over residues 367–376 the composition is skewed to basic and acidic residues; that stretch reads SKAEKRDYDF.

The protein resides in the nucleus. In terms of biological role, brlA, abaA and wetA are pivotal regulators of conidiophore development and conidium maturation. They act individually and together to regulate their own expression and that of numerous other sporulation-specific genes. Binds promoters of target genes at brlA response elements (BREs) containing the conserved sequence 5'-(C/A)(A/G)AGGG(G/A)-3'. The polypeptide is C2H2 type master regulator of conidiophore development brlA (Hapsidospora chrysogena (Acremonium chrysogenum)).